The primary structure comprises 275 residues: uncharacterized protein (275 aa).

A coiled-coil region spans residues 75–157 (AKELIKNRRL…AELKQAAEQG (83 aa)).

This is an uncharacterized protein from Bacillus subtilis (strain 168).